A 110-amino-acid polypeptide reads, in one-letter code: Large ribosomal subunit protein uL22 (110 aa).

The protein belongs to the universal ribosomal protein uL22 family. In terms of assembly, part of the 50S ribosomal subunit.

Functionally, this protein binds specifically to 23S rRNA; its binding is stimulated by other ribosomal proteins, e.g. L4, L17, and L20. It is important during the early stages of 50S assembly. It makes multiple contacts with different domains of the 23S rRNA in the assembled 50S subunit and ribosome. The globular domain of the protein is located near the polypeptide exit tunnel on the outside of the subunit, while an extended beta-hairpin is found that lines the wall of the exit tunnel in the center of the 70S ribosome. The polypeptide is Large ribosomal subunit protein uL22 (Teredinibacter turnerae (strain ATCC 39867 / T7901)).